Consider the following 374-residue polypeptide: Beta-lytic metalloendopeptidase (374 aa).

Residues 1-24 form the signal peptide; sequence MKKISKAGLGLALVCALATIGGNA. A propeptide spanning residues 25-195 is cleaved from the precursor; it reads ARRATAQRRG…RQGRPGRAAV (171 aa). Residues 128–187 form a disordered region; sequence PTRQGAGDAGPRQSAAGAVRAFRRQRAGGRAARRRRVPAGLRPPVQRTAPGQGGFGPLRQ. The segment covering 148 to 164 has biased composition (basic residues); the sequence is AFRRQRAGGRAARRRRV. The cysteines at positions 261 and 307 are disulfide-linked. Zn(2+) is bound by residues His316 and His318. A disulfide bridge connects residues Cys351 and Cys364.

The protein belongs to the peptidase M23A family. The cofactor is Zn(2+).

The protein localises to the secreted. The enzyme catalyses Cleavage of N-acetylmuramoyl-|-Ala, and of the insulin B chain at 23-Gly-|-Phe-24 &gt; 18-Val-|-Cys(SO3H).. This chain is Beta-lytic metalloendopeptidase, found in Achromobacter lyticus.